Reading from the N-terminus, the 60-residue chain is uncharacterized protein (60 aa).

This is an uncharacterized protein from Ureaplasma parvum serovar 3 (strain ATCC 700970).